The following is a 363-amino-acid chain: Heat-inducible transcription repressor HrcA (363 aa).

Belongs to the HrcA family.

In terms of biological role, negative regulator of class I heat shock genes (grpE-dnaK-dnaJ and groELS operons). Prevents heat-shock induction of these operons. This Afipia carboxidovorans (strain ATCC 49405 / DSM 1227 / KCTC 32145 / OM5) (Oligotropha carboxidovorans) protein is Heat-inducible transcription repressor HrcA.